The chain runs to 329 residues: Probable carboxylesterase 8 (329 aa).

The Involved in the stabilization of the negatively charged intermediate by the formation of the oxyanion hole motif lies at 73-75 (HGG). Catalysis depends on residues Ser-161, Asp-264, and His-294.

The protein belongs to the 'GDXG' lipolytic enzyme family. In terms of tissue distribution, expressed in leaves, stems, flowers and siliques.

The catalysed reaction is a carboxylic ester + H2O = an alcohol + a carboxylate + H(+). In terms of biological role, carboxylesterase acting on esters with varying acyl chain length. The sequence is that of Probable carboxylesterase 8 (CXE8) from Arabidopsis thaliana (Mouse-ear cress).